Here is a 365-residue protein sequence, read N- to C-terminus: Transcription elongation factor, mitochondrial (365 aa).

A mitochondrion-targeting transit peptide spans 1 to 40 (MAWRANLACLIKAGGRTRWFPLPEYLSMSPVLHNTCSRRK).

It belongs to the TEFM family. As to quaternary structure, interacts with POLRMT.

It is found in the mitochondrion matrix. It localises to the mitochondrion nucleoid. Its function is as follows. Transcription elongation factor which increases mitochondrial RNA polymerase processivity. Regulates transcription of the mitochondrial genome, including genes important for the oxidative phosphorylation machinery. This Rattus norvegicus (Rat) protein is Transcription elongation factor, mitochondrial (Tefm).